We begin with the raw amino-acid sequence, 95 residues long: Aspartyl/glutamyl-tRNA(Asn/Gln) amidotransferase subunit C (95 aa).

It belongs to the GatC family. Heterotrimer of A, B and C subunits.

It catalyses the reaction L-glutamyl-tRNA(Gln) + L-glutamine + ATP + H2O = L-glutaminyl-tRNA(Gln) + L-glutamate + ADP + phosphate + H(+). It carries out the reaction L-aspartyl-tRNA(Asn) + L-glutamine + ATP + H2O = L-asparaginyl-tRNA(Asn) + L-glutamate + ADP + phosphate + 2 H(+). Its function is as follows. Allows the formation of correctly charged Asn-tRNA(Asn) or Gln-tRNA(Gln) through the transamidation of misacylated Asp-tRNA(Asn) or Glu-tRNA(Gln) in organisms which lack either or both of asparaginyl-tRNA or glutaminyl-tRNA synthetases. The reaction takes place in the presence of glutamine and ATP through an activated phospho-Asp-tRNA(Asn) or phospho-Glu-tRNA(Gln). In Chlorobium phaeobacteroides (strain DSM 266 / SMG 266 / 2430), this protein is Aspartyl/glutamyl-tRNA(Asn/Gln) amidotransferase subunit C.